Here is a 310-residue protein sequence, read N- to C-terminus: 4-diphosphocytidyl-2-C-methyl-D-erythritol kinase (310 aa).

Lys-11 is an active-site residue. Pro-95–Ala-105 is an ATP binding site. Residue Asp-137 is part of the active site.

The protein belongs to the GHMP kinase family. IspE subfamily.

The enzyme catalyses 4-CDP-2-C-methyl-D-erythritol + ATP = 4-CDP-2-C-methyl-D-erythritol 2-phosphate + ADP + H(+). Its pathway is isoprenoid biosynthesis; isopentenyl diphosphate biosynthesis via DXP pathway; isopentenyl diphosphate from 1-deoxy-D-xylulose 5-phosphate: step 3/6. Its function is as follows. Catalyzes the phosphorylation of the position 2 hydroxy group of 4-diphosphocytidyl-2C-methyl-D-erythritol. The protein is 4-diphosphocytidyl-2-C-methyl-D-erythritol kinase of Acaryochloris marina (strain MBIC 11017).